We begin with the raw amino-acid sequence, 153 residues long: ATP synthase subunit b' (153 aa).

Residues 23–40 (LMAIQVVALTYILNSLFF) traverse the membrane as a helical segment.

It belongs to the ATPase B chain family. In terms of assembly, F-type ATPases have 2 components, F(1) - the catalytic core - and F(0) - the membrane proton channel. F(1) has five subunits: alpha(3), beta(3), gamma(1), delta(1), epsilon(1). F(0) has four main subunits: a(1), b(1), b'(1) and c(10-14). The alpha and beta chains form an alternating ring which encloses part of the gamma chain. F(1) is attached to F(0) by a central stalk formed by the gamma and epsilon chains, while a peripheral stalk is formed by the delta, b and b' chains.

Its subcellular location is the cellular thylakoid membrane. In terms of biological role, f(1)F(0) ATP synthase produces ATP from ADP in the presence of a proton or sodium gradient. F-type ATPases consist of two structural domains, F(1) containing the extramembraneous catalytic core and F(0) containing the membrane proton channel, linked together by a central stalk and a peripheral stalk. During catalysis, ATP synthesis in the catalytic domain of F(1) is coupled via a rotary mechanism of the central stalk subunits to proton translocation. Component of the F(0) channel, it forms part of the peripheral stalk, linking F(1) to F(0). The b'-subunit is a diverged and duplicated form of b found in plants and photosynthetic bacteria. In Prochlorococcus marinus (strain MIT 9215), this protein is ATP synthase subunit b'.